A 193-amino-acid polypeptide reads, in one-letter code: MIALEKDEKLLILNWLRNLLARELSDEQLQTLQAVEFSQFFAFLAEIGFEKQSSALQQEIQKIALFQHPRLELAADFTQCFLLEGKVSALPYASAYLDGQSLKQNLAKMDRYLEHFQLQINRQTNEPSDHLVVYLEVLIKLLEQNKTTEAKEFIQQQLLTWFPQFAAKTEKTNIRTNFYPILVKLLFAVLQNF.

This sequence belongs to the TorD/DmsD family. TorD subfamily.

It is found in the cytoplasm. Functionally, involved in the biogenesis of TorA. Acts on TorA before the insertion of the molybdenum cofactor and, as a result, probably favors a conformation of the apoenzyme that is competent for acquiring the cofactor. The sequence is that of Chaperone protein TorD from Actinobacillus succinogenes (strain ATCC 55618 / DSM 22257 / CCUG 43843 / 130Z).